Reading from the N-terminus, the 181-residue chain is METLIASLDDAPIIDKDGYEYLVHPISNGVPMLDPALLREVVVELMQTAELDVDKIVTPEAMGIHLSTALSLQTDIPLVVIRKRAYGLDGEVSLHQQTGYSESEMYINDVEAGDRVLVVDDLLSTGGTLAAICASLSDIGAEIADVVVVLRKVGPSALDDTEFEVTSLLDITVEDGEVLVH.

Belongs to the purine/pyrimidine phosphoribosyltransferase family. Archaeal HPRT subfamily.

May catalyze a purine salvage reaction, the substrate is unknown. The polypeptide is HGPRTase-like protein 1 (Halalkalicoccus jeotgali (strain DSM 18796 / CECT 7217 / JCM 14584 / KCTC 4019 / B3)).